The chain runs to 524 residues: Protein tweety homolog 3 (524 aa).

Residues 1 to 42 are Extracellular-facing; the sequence is MAGVSYAAPWWVSLLHRLPHFDLRWEATSSQFRPEDADYQQA. A helical transmembrane segment spans residues 43–63; sequence LLLLGATALACLALDLLFLLF. The Cytoplasmic portion of the chain corresponds to 64-86; sequence YSFWLCCRRRKTDEHLDADCCCT. The helical transmembrane segment at 87-107 threads the bilayer; that stretch reads AWCVIITTLVCSAGIAVGFYG. The Extracellular portion of the chain corresponds to 108-211; it reads NGETSDGIHR…VDLYDWYRWL (104 aa). Glutamate 110 and aspartate 113 together coordinate Ca(2+). 2 N-linked (GlcNAc...) asparagine glycosylation sites follow: asparagine 126 and asparagine 144. The helical transmembrane segment at 212 to 232 threads the bilayer; sequence GYLGLLLLDVIICLLVLVGLI. Residues 233-236 are Cytoplasmic-facing; the sequence is RSSK. Residues 237–257 form a helical membrane-spanning segment; sequence GILVGVCLLGVLALVISWGAL. Topologically, residues 258-386 are extracellular; that stretch reads GLELAVSVGS…LTGFCYDGVE (129 aa). 2 cysteine pairs are disulfide-bonded: cysteine 271/cysteine 381 and cysteine 299/cysteine 366. N-linked (GlcNAc...) asparagine glycosylation is present at asparagine 351. A helical membrane pass occupies residues 387 to 407; that stretch reads GLIYLALFSFVTALMFSSIVC. Over 408–524 the chain is Cytoplasmic; that stretch reads SIPHTWQQKR…PRPDSSGSGH (117 aa). 2 disordered regions span residues 413–435 and 485–524; these read WQQK…RQAH and RCEN…GSGH. Position 496 is a phosphoserine (serine 496). The short motif at 498–501 is the PY-motif; mediates interaction with NEDD4L element; that stretch reads PPSY. Over residues 501 to 524 the composition is skewed to polar residues; the sequence is YTSSMRAKYLATSQPRPDSSGSGH. Phosphoserine occurs at positions 504 and 522.

This sequence belongs to the tweety family. Homotetramer; disulfide-linked. Forms cis-homodimers in the presence of Ca(2+). Interacts with NEDD4L. In terms of processing, ubiquitinated by NEDD4L. N-glycosylated. Expressed in excitable tissues. Expressed in the brain, heart, skeletal muscle, colon, spleen, kidney and peripheral blood leukocytes. Also expressed in fat, the pancreas, thymus, and uterus.

It is found in the cell membrane. It catalyses the reaction chloride(in) = chloride(out). It carries out the reaction L-glutamate(out) = L-glutamate(in). With respect to regulation, inhibited by (4-[(2-butyl-6,7-dichloro-2- cyclopentyl-2,3-dihydro-1-oxo-1H-inden-5-yl)oxy]butanoic acid), genistein and PD98059 (MEK1 inhibitor). Its function is as follows. Calcium-independent, swelling-dependent volume-regulated anion channel (VRAC-swell) which plays a pivotal role in the process of regulatory volume decrease (RVD) in the brain through the efflux of anions like chloride and organic osmolytes like glutamate. Probable large-conductance Ca(2+)-activated chloride channel. This Mus musculus (Mouse) protein is Protein tweety homolog 3 (Ttyh3).